The following is a 512-amino-acid chain: Cytochrome P450 monooxygenase hkm5 (512 aa).

A helical transmembrane segment spans residues 18 to 38 (LIQLVRALLWVLVITIGGAIV). N184, N263, N275, N374, and N419 each carry an N-linked (GlcNAc...) asparagine glycan. Residue C456 participates in heme binding.

Belongs to the cytochrome P450 family. The cofactor is heme.

The protein localises to the membrane. It catalyses the reaction hancockiamide A + reduced [NADPH--hemoprotein reductase] + O2 = hancockiamide G + oxidized [NADPH--hemoprotein reductase] + 2 H2O + H(+). The catalysed reaction is hancockiamide B + reduced [NADPH--hemoprotein reductase] + O2 = hancockiamide C + oxidized [NADPH--hemoprotein reductase] + 2 H2O + H(+). The enzyme catalyses hancockiamide D + reduced [NADPH--hemoprotein reductase] + O2 = hancockiamide H + oxidized [NADPH--hemoprotein reductase] + 2 H2O + H(+). It participates in secondary metabolite biosynthesis. Cytochrome P450 monooxygenase; part of the gene cluster that mediates the biosynthesis of hancockiamides, an unusual new family of N-cinnamoylated piperazines. The NRPS hkm10 and the NmrA-like reductase hkm9 are proposed to convert two molecules of L-Phe to the intermediary piperazine called xenocockiamide A. Xenocockiamide A is then converted to hancockiamide D via a series of hydroxylations and O-methylations. The tyrosinase hkm6 may catalyze an aromatic hydroxylation, then the 2-oxoglutarate-dependent Fe(II) dioxygenase hkm4 and the FAD-dependent phenol hydroxylase hkm7 may catalyze consecutive hydroxylations to install 2 more hydroxy groups, and the methyltransferase hkm8 probably catalyzes two methylations using 2 molecules of S-adenosyl-L-methionine (SAM). The NRPS hkm11 activates and transfers trans-cinnamate supplied by the PAL hkm12 to hancockiamide D and produces hancockiamide A. NRPS Hkm11 has the flexibility to tolerate the bulky hancockiamide G as a substrate and the absence of the acetyl-transferase hkm3 opens up the opportunity for hkm11 to introduce a second N-cinnamoyl moiety. The cytochrome P450 monooxygenase hkm5 catalyzes the methylenedioxy bridge formation, converting hancockiamide A into hancockiamide G. Hkm5 can also convert hancockiamide B into hancockiamide C, and hancockiamide D into hancockiamide H. The N-acetyltransferase hkm3 finally transfers an acetyl group to 1-N of piperazine, converting hancockiamide A into hancockiamide B and hancockiamide G into hancockiamide C. This Aspergillus hancockii protein is Cytochrome P450 monooxygenase hkm5.